A 435-amino-acid chain; its full sequence is Temperature-sensitive sn-2 acyl-lipid omega-3 desaturase (ferredoxin), chloroplastic (435 aa).

Residues 1–42 (MASSVLSECGFRPLPRFYPKHTTSFASNPKPTFKFNPPLKPP) constitute a chloroplast transit peptide. 2 consecutive transmembrane segments (helical) span residues 111-131 (MSYVVRDVAIVFGLAAVAAYF) and 134-154 (WLLWPLYWFAQGTMFWALFVL). Residues 156-160 (HDCGH) carry the Histidine box-1 motif. The Histidine box-2 signature appears at 192–196 (HRTHH). 2 helical membrane passes run 268 to 290 (VLTSTACWTAMAALLVCLNFVMG) and 297 to 319 (LYGIPYWIFVMWLDFVTYLHHHG). The Histidine box-3 motif lies at 359–363 (HVIHH).

It belongs to the fatty acid desaturase type 1 family.

Its subcellular location is the plastid. The protein resides in the chloroplast membrane. The enzyme catalyses a (7Z,10Z)-hexadecadienoyl-containing glycerolipid + 2 reduced [2Fe-2S]-[ferredoxin] + O2 + 2 H(+) = a (7Z,10Z,13Z)-hexadecatrienoyl-containing glycerolipid + 2 oxidized [2Fe-2S]-[ferredoxin] + 2 H2O. The catalysed reaction is a (9Z,12Z)-octadecadienoyl-containing glycerolipid + 2 reduced [2Fe-2S]-[ferredoxin] + O2 + 2 H(+) = (9Z,12Z,15Z)-octadecatrienoyl-containing glycerolipid + 2 oxidized [2Fe-2S]-[ferredoxin] + 2 H2O. It functions in the pathway lipid metabolism; polyunsaturated fatty acid biosynthesis. Chloroplast omega-3 fatty acid desaturase introduces the third double bond in the biosynthesis of 16:3 and 18:3 fatty acids, important constituents of plant membranes. It is thought to use ferredoxin as an electron donor and to act on fatty acids esterified to galactolipids, sulfolipids and phosphatidylglycerol. This chain is Temperature-sensitive sn-2 acyl-lipid omega-3 desaturase (ferredoxin), chloroplastic, found in Arabidopsis thaliana (Mouse-ear cress).